A 375-amino-acid chain; its full sequence is Homeobox protein Meis3 (375 aa).

Positions 25–51 (PETVPAVPGPYGPHRPPQPLPPGLDSD) are disordered. Residues 31-46 (VPGPYGPHRPPQPLPP) show a composition bias toward pro residues. The 84-residue stretch at 96-179 (GGDVCSSDSF…PIDLVIEDRD (84 aa)) folds into the MEIS N-terminal domain. Disordered regions lie at residues 197–268 (PDQN…KRGI) and 329–348 (NRTG…GGYT). The span at 227–241 (SQSGDNSSDQGDGLD) shows a compositional bias: low complexity. The homeobox; TALE-type DNA-binding region spans 262–324 (RNKKRGIFPK…NARRRIVQPM (63 aa)).

This sequence belongs to the TALE/MEIS homeobox family.

It localises to the nucleus. Its function is as follows. Transcriptional regulator which directly modulates PDPK1 expression, thus promoting survival of pancreatic beta-cells. Also regulates expression of NDFIP1, BNIP3, and CCNG1. This Homo sapiens (Human) protein is Homeobox protein Meis3 (MEIS3).